Here is a 604-residue protein sequence, read N- to C-terminus: Serine/threonine-protein kinase A-Raf (604 aa).

The 73-residue stretch at 19-91 (GTVKVYLPNK…DGEELIVEVL (73 aa)) folds into the RBD domain. Residues 98-144 (MHNFVRKTFFSLAFCDFCLKFLFHGFRCQTCGYKFHQHCSSKVPTVC) form a Phorbol-ester/DAG-type zinc finger. Zn(2+) contacts are provided by H99, C112, C115, C125, C128, H133, C136, and C144. Residues S157 and S162 each carry the phosphoserine modification. 2 disordered regions span residues 178–222 (ELLT…HMVS) and 241–287 (TDAA…DEKK). Residue T181 is modified to Phosphothreonine. Position 186 is a phosphoserine (S186). Residues 210 to 222 (IRSTSTPNVHMVS) are compositionally biased toward polar residues. Residues 252-265 (PRGSPSPASVSSGR) are compositionally biased toward low complexity. S255 and S267 each carry phosphoserine. Basic and acidic residues predominate over residues 272–287 (LPAEQRERKSLADEKK). One can recognise a Protein kinase domain in the interval 308–568 (VQLLKRIGTG…PQILATIELL (261 aa)). Residues 314 to 322 (IGTGSFGTV) and K334 contribute to the ATP site. T316 carries the phosphothreonine modification. D427 (proton acceptor) is an active-site residue.

This sequence belongs to the protein kinase superfamily. TKL Ser/Thr protein kinase family. RAF subfamily. As to quaternary structure, interacts with TH1L/NELFD. It depends on Zn(2+) as a cofactor. Dephosphorylation by the SHOC2-MRAS-PP1c (SMP) complex consisting of SHOC2, GTP-bound M-Ras/MRAS and the catalytic subunit of protein phosphatase 1 (PPP1CA, PPP1CB or PPP1CC); this relieves inactivation and stimulates kinase activity.

It catalyses the reaction L-seryl-[protein] + ATP = O-phospho-L-seryl-[protein] + ADP + H(+). The catalysed reaction is L-threonyl-[protein] + ATP = O-phospho-L-threonyl-[protein] + ADP + H(+). Functionally, involved in the transduction of mitogenic signals from the cell membrane to the nucleus. May also regulate the TOR signaling cascade. Phosphorylates PFKFB2. The polypeptide is Serine/threonine-protein kinase A-Raf (Araf) (Rattus norvegicus (Rat)).